A 426-amino-acid chain; its full sequence is FK506-binding protein 3 (426 aa).

Disordered regions lie at residues 37 to 143 (SLDP…PKHQ) and 171 to 314 (TGNY…KKKK). Composition is skewed to acidic residues over residues 65–94 (DYFE…EAEE), 111–131 (EDEE…DDVS), and 181–225 (QDEE…SEEE). 3 stretches are compositionally biased toward basic and acidic residues: residues 226-257 (GTPK…ESTS), 264-278 (KKDE…KELE), and 287-311 (VEKD…DGDK). One can recognise a PPIase FKBP-type domain in the interval 340–426 (GAKVGIRYIG…TFDIKLVSLK (87 aa)).

The protein belongs to the FKBP-type PPIase family. FKBP3/4 subfamily.

The protein localises to the nucleus. It localises to the nucleolus. It catalyses the reaction [protein]-peptidylproline (omega=180) = [protein]-peptidylproline (omega=0). With respect to regulation, inhibited by both FK506 and rapamycin. In terms of biological role, PPIases accelerate the folding of proteins. It catalyzes the cis-trans isomerization of proline imidic peptide bonds in oligopeptides. The protein is FK506-binding protein 3 (FPR3) of Candida albicans (strain SC5314 / ATCC MYA-2876) (Yeast).